The primary structure comprises 910 residues: DnaJ-like protein MG200 homolog (910 aa).

Residues 4–73 form the J domain; the sequence is AKRDYYEVLG…RANYDKYGHD (70 aa). Disordered stretches follow at residues 102–160, 260–408, and 451–486; these read DNLS…DDIP, TEPS…LEQD, and VLSD…STAP. Positions 111–121 are enriched in basic residues; sequence KKEKTKTKKKG. Over residues 273-283 the composition is skewed to low complexity; the sequence is DSDAVTAATTV. Acidic residues predominate over residues 357 to 379; that stretch reads SDEADATNEPTEQDTISEPEQET. Residues 451 to 462 show a composition bias toward polar residues; that stretch reads VLSDQNPNPQTP.

This Mycoplasma pneumoniae (strain ATCC 29342 / M129 / Subtype 1) (Mycoplasmoides pneumoniae) protein is DnaJ-like protein MG200 homolog.